We begin with the raw amino-acid sequence, 459 residues long: Cysteine--tRNA ligase (459 aa).

Cys-31 contributes to the Zn(2+) binding site. Residues 33 to 43 carry the 'HIGH' region motif; sequence PTVYDNPHIGN. Cys-216, His-241, and Glu-245 together coordinate Zn(2+). The short motif at 274 to 278 is the 'KMSKS' region element; the sequence is KMSKS. Lys-277 lines the ATP pocket.

Belongs to the class-I aminoacyl-tRNA synthetase family. As to quaternary structure, monomer. Requires Zn(2+) as cofactor.

Its subcellular location is the cytoplasm. The catalysed reaction is tRNA(Cys) + L-cysteine + ATP = L-cysteinyl-tRNA(Cys) + AMP + diphosphate. This chain is Cysteine--tRNA ligase, found in Rickettsia massiliae (strain Mtu5).